We begin with the raw amino-acid sequence, 552 residues long: MKGCLATMDKELWIERANDSLVKHFYEQQSDIEQREGFESKLTFGTAGIRGKFGLGEGRLNKFTIEKLALGLARYLNAQTNSPTIVIHYDIRHLSTEFAQIIANVLANHQITVYLPDTYKTTPELSFAVRNLNTTAGIMITASHNPKDYNGIKVYGSDGAQLSTDASELASRYIEEVGDPLQIDIPISKQNTSYIKPFPKSVTDDYMKHIQNMIGYIPKSDLQVVFTSLHGTSVPIVPELLQSLNFNQFNLVEAQCKPDPNFSSVQSANPEDHRAFDQAVELANKSHADLLISTDPDADRLGIAERDAHGHITYFNGNQIGALLLNYRIQQTSQLRHRLMIQSIVSSELTKSLARYNNVEYKEVLTGFKFIAQEIRQLDDHQNMIFAFEESYGFLSEPFVRDKDAVQIVPLIIKYASELKLYGKTLKDELEQIYQTVGRHEDTLFSHTLDGLEGKKKIESIMTHFRSNPPQEIQGLKVKAIEDYLTSEVYHLDKDTTSQINSPKSNVIRVLFDEGFIALRPSGTEPKIKLYVSLKCRNFDDVAQKINAMIFS.

Residue Ser143 is the Phosphoserine intermediate of the active site. Mg(2+) contacts are provided by Ser143, Asp295, Asp297, and Asp299.

It belongs to the phosphohexose mutase family. Mg(2+) is required as a cofactor.

It carries out the reaction alpha-D-glucose 1-phosphate = alpha-D-glucose 6-phosphate. Its pathway is glycolipid metabolism; diglucosyl-diacylglycerol biosynthesis. Its function is as follows. Catalyzes the interconversion between glucose-6-phosphate and alpha-glucose-1-phosphate. This is the first step in the biosynthesis of diglucosyl-diacylglycerol (Glc2-DAG), i.e. the predominant glycolipid found in the S.aureus membrane, which is also used as a membrane anchor for lipoteichoic acid (LTA). The sequence is that of Phosphoglucomutase (pgcA) from Staphylococcus aureus (strain MSSA476).